The chain runs to 233 residues: tRNA (guanine-N(7)-)-methyltransferase (233 aa).

The tract at residues 1 to 36 (MSEFDPNPPRRNFYGRRHGKTLRQSQKGYLSEDLGS) is disordered. Residues glutamate 68, glutamate 93, aspartate 120, and aspartate 142 each contribute to the S-adenosyl-L-methionine site. Aspartate 142 is a catalytic residue. Residues lysine 146, aspartate 178, and 211 to 214 (TRYE) contribute to the substrate site.

The protein belongs to the class I-like SAM-binding methyltransferase superfamily. TrmB family.

It carries out the reaction guanosine(46) in tRNA + S-adenosyl-L-methionine = N(7)-methylguanosine(46) in tRNA + S-adenosyl-L-homocysteine. Its pathway is tRNA modification; N(7)-methylguanine-tRNA biosynthesis. Catalyzes the formation of N(7)-methylguanine at position 46 (m7G46) in tRNA. The polypeptide is tRNA (guanine-N(7)-)-methyltransferase (Paracoccus denitrificans (strain Pd 1222)).